Consider the following 365-residue polypeptide: UDP-galactose transporter homolog 1 (365 aa).

2 helical membrane passes run 42–62 and 80–100; these read IIDL…WAVL and ASLV…YAYL. N-linked (GlcNAc...) asparagine glycosylation is present at Asn115. Helical transmembrane passes span 182 to 202 and 206 to 226; these read YAVV…HAAP and SGAG…SMLL. The N-linked (GlcNAc...) asparagine glycan is linked to Asn231. A run of 4 helical transmembrane segments spans residues 249–269, 289–309, 315–335, and 339–359; these read VMCG…LTFS, DIVL…QTLE, VLVT…VVWF, and LTLG…FEAW.

This sequence belongs to the nucleotide-sugar transporter family. SLC35B subfamily.

The protein localises to the endoplasmic reticulum membrane. Its function is as follows. May be involved in specific transport of UDP-Gal from the cytosol to the Golgi lumen. Involved in the maintenance of optimal conditions for the folding of secretory pathway proteins in the endoplasmic reticulum. The protein is UDP-galactose transporter homolog 1 (HUT1) of Yarrowia lipolytica (strain CLIB 122 / E 150) (Yeast).